Consider the following 956-residue polypeptide: Kinesin heavy chain isoform 5C (956 aa).

The Kinesin motor domain occupies 8 to 327 (SIKVMCRFRP…LMFGQRAKTI (320 aa)). Positions 87, 89, 90, 91, 92, 93, 94, and 99 each coordinate ATP. The microtubule-binding stretch occupies residues 174-315 (VSSPEEVMDV…PSVFNEAETK (142 aa)). Thr403 bears the Phosphothreonine mark. Residues 406–923 (VDGISAEKEK…RRAHSAQIAK (518 aa)) are a coiled coil. Residues 859-956 (CELPKLEKRL…GSSNSTHYQK (98 aa)) form a globular region. The segment at 910 to 956 (KNMARRAHSAQIAKPIRPGHYPASSPTAVHAVRGGGGGSSNSTHYQK) is disordered.

It belongs to the TRAFAC class myosin-kinesin ATPase superfamily. Kinesin family. Kinesin subfamily. As to quaternary structure, oligomer composed of two heavy chains and two light chains. Interacts with GRIP1. Interacts with KLC3 and TRAK1. Interacts with ZFYVE27.

The protein localises to the cytoplasm. The protein resides in the cytoskeleton. It is found in the cell projection. It localises to the dendrite. It carries out the reaction ATP + H2O = ADP + phosphate + H(+). Microtubule-associated force-producing protein that may play a role in organelle transport. Has ATPase activity. Involved in synaptic transmission. Mediates dendritic trafficking of mRNAs. Required for anterograde axonal transportation of MAPK8IP3/JIP3 which is essential for MAPK8IP3/JIP3 function in axon elongation. This is Kinesin heavy chain isoform 5C (Kif5c) from Mus musculus (Mouse).